Here is a 215-residue protein sequence, read N- to C-terminus: ER lumen protein-retaining receptor B (215 aa).

6 helical membrane passes run 6 to 26 (LAGD…IHTI), 55 to 77 (FVSL…IVWY), 98 to 118 (WFLV…FTFL), 120 to 140 (VLWT…LVLL), 149 to 169 (LTGQ…LNWI), and 178 to 198 (FVHW…ADFF).

It belongs to the ERD2 family.

Its subcellular location is the golgi apparatus membrane. The protein localises to the endoplasmic reticulum membrane. Determines the specificity of the luminal endoplasmic reticulum protein retention system. Required for the retro-transport of calreticulin-3 (CRT3) from the Golgi to the ER. Specifically required for elongation factor Tu receptor (EFR) function in response to the pathogen-associated molecular pattern (PAMP) elf18. In Arabidopsis thaliana (Mouse-ear cress), this protein is ER lumen protein-retaining receptor B (ERD2B).